The chain runs to 76 residues: RNA-binding protein KhpA (76 aa).

The region spanning 29 to 76 (QNIIELRVSPKDVGKVIGKNGRIAKSLRAILTAASVKAGKNFSLEIID) is the KH domain.

Belongs to the KhpA RNA-binding protein family. Forms a complex with KhpB.

It localises to the cytoplasm. A probable RNA chaperone. Forms a complex with KhpB which binds to cellular RNA and controls its expression. Plays a role in peptidoglycan (PG) homeostasis and cell length regulation. The polypeptide is RNA-binding protein KhpA (Leptospira interrogans serogroup Icterohaemorrhagiae serovar copenhageni (strain Fiocruz L1-130)).